We begin with the raw amino-acid sequence, 139 residues long: Probable transcription termination protein NusA (139 aa).

In terms of domain architecture, KH spans 31–97; it reads DDRVVYVVTA…YNVTVSENDT (67 aa).

This sequence belongs to the NusA family.

It is found in the cytoplasm. Functionally, participates in transcription termination. This chain is Probable transcription termination protein NusA, found in Halobacterium salinarum (strain ATCC 29341 / DSM 671 / R1).